The chain runs to 358 residues: MVDSLKKPGFEEIRPGVKVPAKETLLTPRFYTTDFDEMARMDISVNEDELLAILEEFRTDYNRHHFVRDAEFEKSWDHIDGDTRRLFVEFLERSCTAEFSGFLLYKELGRRLKDKSPVLAECFNLMSRDEARHAGFLNKAMSDFNLSLDLGFLTKSRNYTFFKPKFIFYATYLSEKIGYWRYITIYRHLEAHPEDRIYPIFRFFENWCQDENRHGDFFDAIMKSQPQMLNDWKAKLWSRFFLLSVFATMYLNDIQRKDFYATIGLDARDYDIYVIKKTNETAGRVFPIILDVDSPEFYERLDICVENSEKLSAIASSNTPKFLQFFQKLPVLASTGWQLLRLYLMKPIDAVSAQGAAR.

The protein belongs to the AcsF family. Requires Fe cation as cofactor.

It catalyses the reaction Mg-protoporphyrin IX 13-monomethyl ester + 3 NADPH + 3 O2 + 2 H(+) = 3,8-divinyl protochlorophyllide a + 3 NADP(+) + 5 H2O. It functions in the pathway porphyrin-containing compound metabolism; chlorophyll biosynthesis (light-independent). Functionally, catalyzes the formation of the isocyclic ring in chlorophyll biosynthesis. Mediates the cyclase reaction, which results in the formation of divinylprotochlorophyllide (Pchlide) characteristic of all chlorophylls from magnesium-protoporphyrin IX 13-monomethyl ester (MgPMME). The protein is Magnesium-protoporphyrin IX monomethyl ester [oxidative] cyclase 3 of Nostoc sp. (strain PCC 7120 / SAG 25.82 / UTEX 2576).